The following is a 712-amino-acid chain: Osmolarity two-component system protein SSK1 (712 aa).

Positions 73–114 (ADNTSSNNTNDNSCRSKSNGAGSGANLSVNSNTKSSVSPTAG) are disordered. The segment covering 74-85 (DNTSSNNTNDNS) has biased composition (low complexity). Residues 87 to 113 (RSKSNGAGSGANLSVNSNTKSSVSPTA) show a composition bias toward polar residues. 6 positions are modified to phosphoserine: Ser-110, Ser-195, Ser-327, Ser-351, Ser-368, and Ser-380. The segment at 340 to 362 (KADLKGKDGNSSPQEFKLITDEE) is disordered. The tract at residues 448-468 (EVQRRKEDVTPASPILTSSQT) is disordered. Residues 505–647 (NVLIVEDNVI…WLSKKITEWG (143 aa)) form the Response regulatory domain. The residue at position 554 (Asp-554) is a 4-aspartylphosphate. The disordered stretch occupies residues 672-712 (KSPQKPIAPSNPHSFKQATSMTPTHSPVRKNSNLSPTQIEL). Position 673 is a phosphoserine (Ser-673). A compositionally biased stretch (polar residues) spans 682–712 (NPHSFKQATSMTPTHSPVRKNSNLSPTQIEL). Thr-693 is subject to Phosphothreonine. Residues Ser-703 and Ser-706 each carry the phosphoserine modification.

Belongs to the SSK1 family. Interacts with SSK2, SSK22 and YPD1. Post-translationally, the phosphorelay mechanism involves the sequential transfer of a phosphate group from 'His-576' (H1) to 'Asp-1144' (D1) of SLN1, then to 'His-64' (H2) of YPD1 and finally to Asp-554 (D2) of SSK1.

Its subcellular location is the cytoplasm. Final receptor of the SLN1-YPD1-SSK1 two-component regulatory system, which controls activity of the HOG1 pathway in response to changes in the osmolarity of the extracellular environment. Under normal osmotic conditions, maintained in a phosphorylated and inactive state by the phosphorelay intermediate protein YPD1. Under conditions of high osmolarity, the histidine kinase SLN1 is no longer active and the unphosphorylated form of SSK1 interacts with and activates SSK2 and SSK22, two MAPKKKs that further stimulate the PBS2-HOG1 MAPKK-MAPK cascade. Unphosphorylated SSK1 is subsequently degraded by the UBC7-dependent ubiquitin-proteasome system to down-regulate the HOG1 pathway after completion of the osmotic adaptation. The chain is Osmolarity two-component system protein SSK1 from Saccharomyces cerevisiae (strain ATCC 204508 / S288c) (Baker's yeast).